Consider the following 70-residue polypeptide: Translational regulator CsrA (70 aa).

Belongs to the CsrA/RsmA family. Homodimer; the beta-strands of each monomer intercalate to form a hydrophobic core, while the alpha-helices form wings that extend away from the core.

It localises to the cytoplasm. In terms of biological role, a key translational regulator that binds mRNA to regulate translation initiation and/or mRNA stability. Mediates global changes in gene expression, shifting from rapid growth to stress survival by linking envelope stress, the stringent response and the catabolite repression systems. Usually binds in the 5'-UTR; binding at or near the Shine-Dalgarno sequence prevents ribosome-binding, repressing translation, binding elsewhere in the 5'-UTR can activate translation and/or stabilize the mRNA. Its function is antagonized by small RNA(s). The polypeptide is Translational regulator CsrA (Hydrogenovibrio crunogenus (strain DSM 25203 / XCL-2) (Thiomicrospira crunogena)).